A 513-amino-acid polypeptide reads, in one-letter code: Light-independent protochlorophyllide reductase subunit B (513 aa).

Residue Asp-36 coordinates [4Fe-4S] cluster. Asp-299 (proton donor) is an active-site residue. 434–435 (GM) provides a ligand contact to substrate.

The protein belongs to the ChlB/BchB/BchZ family. As to quaternary structure, protochlorophyllide reductase is composed of three subunits; ChlL, ChlN and ChlB. Forms a heterotetramer of two ChlB and two ChlN subunits. [4Fe-4S] cluster is required as a cofactor.

Its subcellular location is the plastid. The protein localises to the chloroplast. It carries out the reaction chlorophyllide a + oxidized 2[4Fe-4S]-[ferredoxin] + 2 ADP + 2 phosphate = protochlorophyllide a + reduced 2[4Fe-4S]-[ferredoxin] + 2 ATP + 2 H2O. It functions in the pathway porphyrin-containing compound metabolism; chlorophyll biosynthesis (light-independent). Component of the dark-operative protochlorophyllide reductase (DPOR) that uses Mg-ATP and reduced ferredoxin to reduce ring D of protochlorophyllide (Pchlide) to form chlorophyllide a (Chlide). This reaction is light-independent. The NB-protein (ChlN-ChlB) is the catalytic component of the complex. The chain is Light-independent protochlorophyllide reductase subunit B from Anthoceros angustus (Hornwort).